A 221-amino-acid chain; its full sequence is Redox-sensing transcriptional repressor Rex (221 aa).

The segment at residues 17-56 is a DNA-binding region (H-T-H motif); sequence IYYYYLSSLHEAGIKRINSTEISEAIKFDAATVRRDFSYF. Residue 91–96 participates in NAD(+) binding; it reads GTGNLG.

Belongs to the transcriptional regulatory Rex family. As to quaternary structure, homodimer.

The protein resides in the cytoplasm. Modulates transcription in response to changes in cellular NADH/NAD(+) redox state. The protein is Redox-sensing transcriptional repressor Rex of Oenococcus oeni (strain ATCC BAA-331 / PSU-1).